The sequence spans 189 residues: MEVILLERIGRLGQMGETVKVKDGYARNFLLPQGKALRANEANKKKFEGQRAQLEAQNLERKNEAQAVAEKLNGESFIVVRSAGETGQLYGSVSTRDIADIISANGFTLHRNQVELNHPIKAIGLHEVSISLHPEVQVQVTVNIARSTEEAERQAKGEDLTSIEAIYGIEEQPLSEEVFDEEDEAEDQA.

It belongs to the bacterial ribosomal protein bL9 family.

Binds to the 23S rRNA. The chain is Large ribosomal subunit protein bL9 from Brucella anthropi (strain ATCC 49188 / DSM 6882 / CCUG 24695 / JCM 21032 / LMG 3331 / NBRC 15819 / NCTC 12168 / Alc 37) (Ochrobactrum anthropi).